A 270-amino-acid polypeptide reads, in one-letter code: Small ribosomal subunit protein eS1 (270 aa).

Disordered stretches follow at residues 1–21 (MAVGKNKGTSKGGKKGSKKKV) and 238–270 (GGGKGAEVSTGAAEGGVTIDRPEGYEPPVQESV).

The protein belongs to the eukaryotic ribosomal protein eS1 family. Component of the small ribosomal subunit. Mature ribosomes consist of a small (40S) and a large (60S) subunit. The 40S subunit contains about 33 different proteins and 1 molecule of RNA (18S). The 60S subunit contains about 49 different proteins and 3 molecules of RNA (28S, 5.8S and 5S).

Its subcellular location is the cytoplasm. The protein is Small ribosomal subunit protein eS1 of Aedes aegypti (Yellowfever mosquito).